Consider the following 827-residue polypeptide: Cadherin-17 (827 aa).

The first 21 residues, 1–21 (MVSAQLHFLCLLTLYLTGAYG), serve as a signal peptide directing secretion. Residues 22–786 (QEGKFSGPLK…NQVGIPTVGM (765 aa)) are Extracellular-facing. Cadherin domains are found at residues 29 to 127 (PLKP…TFLQ), 128 to 243 (TKYE…APEP), 244 to 339 (VEIR…PPTC), 340 to 448 (LSQV…IPIF), 449 to 565 (ERSD…VPVF), 566 to 666 (PQQI…PPRL), and 667 to 776 (AKDY…RPAG). 7 N-linked (GlcNAc...) asparagine glycosylation sites follow: asparagine 148, asparagine 183, asparagine 249, asparagine 418, asparagine 545, asparagine 573, and asparagine 721. A helical transmembrane segment spans residues 787–807 (AVGILLTTFLVIGIILAVVFI). Topologically, residues 808–827 (RMRKDKVEDPQSPENKPLRS) are cytoplasmic.

In terms of tissue distribution, liver and intestine.

The protein resides in the cell membrane. In terms of biological role, cadherins are calcium-dependent cell adhesion proteins. They preferentially interact with themselves in a homophilic manner in connecting cells; cadherins may thus contribute to the sorting of heterogeneous cell types. LI-cadherin may have a role in the morphological organization of liver and intestine. This chain is Cadherin-17 (Cdh17), found in Rattus norvegicus (Rat).